Consider the following 143-residue polypeptide: Transcription antitermination protein NusB (143 aa).

This sequence belongs to the NusB family.

In terms of biological role, involved in transcription antitermination. Required for transcription of ribosomal RNA (rRNA) genes. Binds specifically to the boxA antiterminator sequence of the ribosomal RNA (rrn) operons. The chain is Transcription antitermination protein NusB from Buchnera aphidicola subsp. Acyrthosiphon pisum (strain 5A).